Here is a 285-residue protein sequence, read N- to C-terminus: Shikimate dehydrogenase (NADP(+)) (285 aa).

Shikimate-binding positions include 22–24 and Thr69; that span reads SMS. Residue Lys73 is the Proton acceptor of the active site. Asp85 contacts NADP(+). The shikimate site is built by Asn94 and Asp110. NADP(+)-binding positions include 136–140, 160–165, and Met225; these read GAGGA and NRTVAR. Position 227 (Tyr227) interacts with shikimate. Gly248 provides a ligand contact to NADP(+).

Belongs to the shikimate dehydrogenase family. As to quaternary structure, homodimer.

The catalysed reaction is shikimate + NADP(+) = 3-dehydroshikimate + NADPH + H(+). It functions in the pathway metabolic intermediate biosynthesis; chorismate biosynthesis; chorismate from D-erythrose 4-phosphate and phosphoenolpyruvate: step 4/7. Involved in the biosynthesis of the chorismate, which leads to the biosynthesis of aromatic amino acids. Catalyzes the reversible NADPH linked reduction of 3-dehydroshikimate (DHSA) to yield shikimate (SA). This chain is Shikimate dehydrogenase (NADP(+)), found in Caulobacter vibrioides (strain ATCC 19089 / CIP 103742 / CB 15) (Caulobacter crescentus).